We begin with the raw amino-acid sequence, 174 residues long: uncharacterized protein (174 aa).

This is an uncharacterized protein from Mycobacterium tuberculosis (strain CDC 1551 / Oshkosh).